Consider the following 96-residue polypeptide: Co-chaperonin GroES (96 aa).

The protein belongs to the GroES chaperonin family. Heptamer of 7 subunits arranged in a ring. Interacts with the chaperonin GroEL.

Its subcellular location is the cytoplasm. Together with the chaperonin GroEL, plays an essential role in assisting protein folding. The GroEL-GroES system forms a nano-cage that allows encapsulation of the non-native substrate proteins and provides a physical environment optimized to promote and accelerate protein folding. GroES binds to the apical surface of the GroEL ring, thereby capping the opening of the GroEL channel. The protein is Co-chaperonin GroES of Vibrio atlanticus (strain LGP32) (Vibrio splendidus (strain Mel32)).